Reading from the N-terminus, the 672-residue chain is tRNA 5-methylaminomethyl-2-thiouridine biosynthesis bifunctional protein MnmC (672 aa).

The tRNA (mnm(5)s(2)U34)-methyltransferase stretch occupies residues 1 to 235 (MTRVLEPAEP…KRDMTVARFA (235 aa)). The FAD-dependent cmnm(5)s(2)U34 oxidoreductase stretch occupies residues 259 to 672 (IGAGLAGCAV…SAGPGVDAAG (414 aa)).

It in the N-terminal section; belongs to the methyltransferase superfamily. tRNA (mnm(5)s(2)U34)-methyltransferase family. This sequence in the C-terminal section; belongs to the DAO family. It depends on FAD as a cofactor.

It localises to the cytoplasm. It catalyses the reaction 5-aminomethyl-2-thiouridine(34) in tRNA + S-adenosyl-L-methionine = 5-methylaminomethyl-2-thiouridine(34) in tRNA + S-adenosyl-L-homocysteine + H(+). Catalyzes the last two steps in the biosynthesis of 5-methylaminomethyl-2-thiouridine (mnm(5)s(2)U) at the wobble position (U34) in tRNA. Catalyzes the FAD-dependent demodification of cmnm(5)s(2)U34 to nm(5)s(2)U34, followed by the transfer of a methyl group from S-adenosyl-L-methionine to nm(5)s(2)U34, to form mnm(5)s(2)U34. The protein is tRNA 5-methylaminomethyl-2-thiouridine biosynthesis bifunctional protein MnmC of Cupriavidus metallidurans (strain ATCC 43123 / DSM 2839 / NBRC 102507 / CH34) (Ralstonia metallidurans).